We begin with the raw amino-acid sequence, 382 residues long: Cytochrome c biogenesis CcmF N-terminal-like mitochondrial protein 1 (382 aa).

4 helical membrane passes run 1-21 (MSIS…FVAF), 30-50 (AFGA…LLFC), 79-99 (HEGS…FFCY), and 117-137 (SLFF…LLRY).

It belongs to the CcmF/CycK/Ccl1/NrfE/CcsA family. Interacts with CCMFN2 and CCMH.

It is found in the mitochondrion inner membrane. In terms of biological role, forms a complex with CCMFC, CCMFN2 and CCMH that performs the assembly of heme with c-type apocytochromes in mitochondria. This Arabidopsis thaliana (Mouse-ear cress) protein is Cytochrome c biogenesis CcmF N-terminal-like mitochondrial protein 1.